The following is a 393-amino-acid chain: Isocitrate dehydrogenase [NAD] subunit gamma, mitochondrial (393 aa).

The N-terminal 39 residues, 1 to 39 (MALKVATVAGSAAKAVLGPALLCRPWEVLGAHEVPSRNI), are a transit peptide targeting the mitochondrion. Residues T120 and N133 each contribute to the citrate site. The substrate site is built by R136, R167, and D254. A Mn(2+)-binding site is contributed by D254. 3 residues coordinate ADP: N312, T313, and N324.

It belongs to the isocitrate and isopropylmalate dehydrogenases family. Heterooligomer of subunits alpha (IDH3A), beta (IDH3B), and gamma (IDH3G) in the apparent ratio of 2:1:1. The heterodimer containing one IDH3A and one IDH3B subunit and the heterodimer containing one IDH3A and one IDH3G subunit assemble into a heterotetramer (which contains two subunits of IDH3A, one of IDH3B and one of IDH3G) and further into the heterooctamer. The cofactor is Mg(2+). Requires Mn(2+) as cofactor.

It is found in the mitochondrion. With respect to regulation, the heterotetramer and the heterodimer composed of IDH3A and IDH3G subunits can be allosterically activated by citrate (CIT) or/and ADP, and the two activators can act independently or synergistically. The heterodimer composed of IDH3A and IDH3B subunits cannot be allosterically regulated and the allosteric regulation of the heterotetramer is through the IDH3G subunit and not the IDH3B subunit. The IDH3G subunit contains the allosteric site which consists of a CIT-binding site and an ADP-binding site, and the binding of CIT and ADP causes conformational changes at the allosteric site which are transmitted to the active site in the catalytic subunit (IDH3A) through a cascade of conformational changes at the heterodimer interface, leading to stabilization of the isocitrate-binding at the active site and thus activation of the enzyme. ATP can activate the heterotetramer and the heterodimer composed of IDH3A and IDH3G subunits at low concentrations but inhibits their activities at high concentrations, whereas ATP exhibits only inhibitory effect on the heterodimer composed of IDH3A and IDH3B subunits. Its function is as follows. Regulatory subunit which plays a role in the allosteric regulation of the enzyme catalyzing the decarboxylation of isocitrate (ICT) into alpha-ketoglutarate. The heterodimer composed of the alpha (IDH3A) and beta (IDH3B) subunits and the heterodimer composed of the alpha (IDH3A) and gamma (IDH3G) subunits, have considerable basal activity but the full activity of the heterotetramer (containing two subunits of IDH3A, one of IDH3B and one of IDH3G) requires the assembly and cooperative function of both heterodimers. The protein is Isocitrate dehydrogenase [NAD] subunit gamma, mitochondrial (IDH3G) of Homo sapiens (Human).